The following is a 406-amino-acid chain: NAC transcription factor NAM-1 (406 aa).

Residues 1–11 show a composition bias toward polar residues; sequence MGSPDSSSGSA. A disordered region spans residues 1 to 40; sequence MGSPDSSSGSAQKPPRHQHQHQPPPPRRQGSAPELPPGFR. Positions 35 to 204 constitute an NAC domain; it reads LPPGFRFHPT…DWVLCRIYKK (170 aa). The DNA-binding element occupies 137-210; the sequence is VGVKKALVFY…IYKKTSKAAA (74 aa).

It localises to the nucleus. In terms of biological role, transcription factor of the NAC family associated with the grain protein content (GPC). Accelerates senescence and increases nutrient remobilization from leaves to developing grains. Sequences of 11 European varieties of H.vulgare tested belongs to the same haplotype while the sequence found in H.spontaneum, an ancestor of the cultivated H.vulgare which has a higher GPC, belongs to an other haplotype. The polypeptide is NAC transcription factor NAM-1 (NAM-1) (Hordeum vulgare subsp. vulgare (Domesticated barley)).